The following is a 512-amino-acid chain: Probable anion transporter 3, chloroplastic (512 aa).

A chloroplast-targeting transit peptide spans 1-44 (MATVGSLKPLHHSSCSSSFPRNPIVNRKALLGFVFDSARKNQIR). 12 helical membrane-spanning segments follow: residues 102–124 (VILT…VAVV), 139–159 (VVQS…GALV), 167–187 (VLAW…WAAA), 191–211 (LALL…MPSM), 228–248 (VGIS…LTPL), 250–270 (LSSI…LLWV), 324–344 (WAII…LSWM), 359–379 (AAWF…YAGA), 396–416 (KIMQ…LNFA), 422–442 (AAVF…GFLL), 462–482 (AGTL…QWLG), and 486–506 (AFLT…LLFA).

Belongs to the major facilitator superfamily. Sodium/anion cotransporter (TC 2.A.1.14) family. As to expression, expressed in roots.

The protein localises to the plastid. It localises to the chloroplast membrane. Functionally, inorganic phosphate and probable anion transporter. This chain is Probable anion transporter 3, chloroplastic (ANTR3), found in Arabidopsis thaliana (Mouse-ear cress).